Consider the following 319-residue polypeptide: Acetyl-coenzyme A carboxylase carboxyl transferase subunit alpha (319 aa).

In terms of domain architecture, CoA carboxyltransferase C-terminal spans 35–296 (NIDEEVHRLR…KAQLLEDLAD (262 aa)).

The protein belongs to the AccA family. In terms of assembly, acetyl-CoA carboxylase is a heterohexamer composed of biotin carboxyl carrier protein (AccB), biotin carboxylase (AccC) and two subunits each of ACCase subunit alpha (AccA) and ACCase subunit beta (AccD).

Its subcellular location is the cytoplasm. The enzyme catalyses N(6)-carboxybiotinyl-L-lysyl-[protein] + acetyl-CoA = N(6)-biotinyl-L-lysyl-[protein] + malonyl-CoA. Its pathway is lipid metabolism; malonyl-CoA biosynthesis; malonyl-CoA from acetyl-CoA: step 1/1. Component of the acetyl coenzyme A carboxylase (ACC) complex. First, biotin carboxylase catalyzes the carboxylation of biotin on its carrier protein (BCCP) and then the CO(2) group is transferred by the carboxyltransferase to acetyl-CoA to form malonyl-CoA. The polypeptide is Acetyl-coenzyme A carboxylase carboxyl transferase subunit alpha (Salmonella paratyphi C (strain RKS4594)).